A 145-amino-acid chain; its full sequence is Early nodulin-like protein 21 (145 aa).

The signal sequence occupies residues 1–17 (MFLWLVIVLTISASVSS). The Phytocyanin domain maps to 18–116 (YEHKLNWVVP…GQKMIVEVIS (99 aa)). N-linked (GlcNAc...) asparagine glycans are attached at residues Asn-30 and Asn-71. Cysteines 70 and 104 form a disulfide. Ser-116 carries GPI-anchor amidated serine lipidation. Residues 117-145 (RDHTTTSAAPPAAFAVLLCFFSLSLYFVA) constitute a propeptide, removed in mature form.

The protein belongs to the early nodulin-like (ENODL) family. In terms of tissue distribution, mostly expressed in leaves and flowers, and, to a lower extent, in roots and stems, but barely in seedlings and seeds.

It is found in the cell membrane. May act as a carbohydrate transporter. This is Early nodulin-like protein 21 from Arabidopsis thaliana (Mouse-ear cress).